The sequence spans 327 residues: Aspartate--ammonia ligase (327 aa).

The protein belongs to the class-II aminoacyl-tRNA synthetase family. AsnA subfamily.

Its subcellular location is the cytoplasm. The enzyme catalyses L-aspartate + NH4(+) + ATP = L-asparagine + AMP + diphosphate + H(+). It participates in amino-acid biosynthesis; L-asparagine biosynthesis; L-asparagine from L-aspartate (ammonia route): step 1/1. The chain is Aspartate--ammonia ligase from Bacillus cereus (strain AH187).